Here is a 318-residue protein sequence, read N- to C-terminus: Malate dehydrogenase (318 aa).

Residues 10–15 (GGGQIG) and aspartate 34 each bind NAD(+). Residues arginine 83 and arginine 89 each contribute to the substrate site. Residues asparagine 96 and 119–121 (ISN) each bind NAD(+). Substrate is bound by residues asparagine 121 and arginine 152. Histidine 176 acts as the Proton acceptor in catalysis.

Belongs to the LDH/MDH superfamily. MDH type 3 family.

It carries out the reaction (S)-malate + NAD(+) = oxaloacetate + NADH + H(+). In terms of biological role, catalyzes the reversible oxidation of malate to oxaloacetate. This chain is Malate dehydrogenase, found in Geotalea uraniireducens (strain Rf4) (Geobacter uraniireducens).